The chain runs to 452 residues: Glycine receptor subunit alpha-2 (452 aa).

An N-terminal signal peptide occupies residues 1–27 (MYRQLVNILTALFAFFLGTNHFREAFC). The Extracellular segment spans residues 28-256 (KDHDSRSGKH…KFHLERQMGY (229 aa)). The N-linked (GlcNAc...) asparagine glycan is linked to N72. Residue R99 coordinates glycine. R99 contacts strychnine. A glycan (N-linked (GlcNAc...) asparagine) is linked at N103. S163 contacts glycine. C172 and C186 form a disulfide bridge. Positions 226 and 228 each coordinate Zn(2+). An intrachain disulfide couples C232 to C243. Residue T238 participates in glycine binding. Residue H249 participates in Zn(2+) binding. Residues 257–278 (YLIQMYIPSLLIVILSWVSFWI) form a helical membrane-spanning segment. The Cytoplasmic portion of the chain corresponds to 279 to 283 (NMDAA). The chain crosses the membrane as a helical span at residues 284–304 (PARVALGITTVLTMTTQSSGS). Residues 305–315 (RASLPKVSYVK) lie on the Extracellular side of the membrane. A helical membrane pass occupies residues 316–336 (AIDIWMAVCLLFVFAALLEYA). The Cytoplasmic segment spans residues 337 to 420 (AVNFVSRQHK…FVDRAKRIDT (84 aa)). Residues 421 to 441 (ISRAAFPLAFLIFNIFYWITY) form a helical membrane-spanning segment. Residues 442 to 452 (KIIRHEDVHKK) lie on the Extracellular side of the membrane.

Belongs to the ligand-gated ion channel (TC 1.A.9) family. Glycine receptor (TC 1.A.9.3) subfamily. GLRA2 sub-subfamily. As to quaternary structure, interacts with GLRB. Heteropentamer composed of GLRA2 and GLRB; functional GLRB-GLRA2 heteropentamers contain four GLRA2 subunits and one GLRB subunit, although alternative subunit composition cannot be excluded. Homopentamer (in vitro). Both homopentamers and heteropentamers form functional ion channels, but their characteristics are subtly different. As to expression, detected in the retina inner plexiform layer (at protein level). Detected in neonate retina. Detected in brain. Detected in spinal cord, with higher levels in the dorsal horn.

It localises to the postsynaptic cell membrane. The protein resides in the synapse. It is found in the cell membrane. The protein localises to the cell projection. It catalyses the reaction chloride(in) = chloride(out). With respect to regulation, channel opening is triggered by extracellular glycine. Channel opening is also triggered by taurine and beta-alanine. Inhibited by strychnine. Inhibited by picrotoxin. Subunit of heteromeric glycine-gated chloride channels. Plays a role in synaptic plasticity. Contributes to the generation of inhibitory postsynaptic currents, and is involved in the down-regulation of neuronal excitability. Plays a role in cellular responses to ethanol. The chain is Glycine receptor subunit alpha-2 from Mus musculus (Mouse).